A 208-amino-acid chain; its full sequence is Peptidyl-tRNA hydrolase 2 (208 aa).

The span at 32–45 (SNASSTKKSSATLL) shows a compositional bias: low complexity. The tract at residues 32-81 (SNASSTKKSSATLLRSKEMKEGKLHNDTDEEESESEDESDEDEDIESTSL) is disordered. Residues 46-58 (RSKEMKEGKLHND) are compositionally biased toward basic and acidic residues. Acidic residues predominate over residues 59-77 (TDEEESESEDESDEDEDIE). Residue lysine 152 forms a Glycyl lysine isopeptide (Lys-Gly) (interchain with G-Cter in ubiquitin) linkage.

It belongs to the PTH2 family.

The protein resides in the cytoplasm. The enzyme catalyses an N-acyl-L-alpha-aminoacyl-tRNA + H2O = an N-acyl-L-amino acid + a tRNA + H(+). Its function is as follows. The natural substrate for this enzyme may be peptidyl-tRNAs which drop off the ribosome during protein synthesis. This chain is Peptidyl-tRNA hydrolase 2, found in Saccharomyces cerevisiae (strain ATCC 204508 / S288c) (Baker's yeast).